An 85-amino-acid chain; its full sequence is uncharacterized protein (85 aa).

The signal sequence occupies residues 1-20; the sequence is MIKLFCVLAAFISINSACQS.

This is an uncharacterized protein from Invertebrate iridescent virus 6 (IIV-6).